The following is a 165-amino-acid chain: Basic leucine zipper 43 (165 aa).

The region spanning 70–133 (NERKQKRKIS…EKVIEENVQL (64 aa)) is the bZIP domain. The tract at residues 72 to 93 (RKQKRKISNRESARRSRMRKQR) is basic motif. Residues 98–112 (LWSQVMWLRDENHQL) are leucine-zipper.

As to quaternary structure, forms heterodimers with BZIP34 and BZIP61.

The protein localises to the nucleus. Its function is as follows. Probable transcription factor involved in somatic embryogenesis. Acts as a positive regulator of BHLH109. The chain is Basic leucine zipper 43 from Arabidopsis thaliana (Mouse-ear cress).